The following is a 507-amino-acid chain: ATP synthase subunit alpha, chloroplastic (507 aa).

170–177 (GDRQTGKT) serves as a coordination point for ATP. A Phosphothreonine modification is found at Thr257.

It belongs to the ATPase alpha/beta chains family. In terms of assembly, F-type ATPases have 2 components, CF(1) - the catalytic core - and CF(0) - the membrane proton channel. CF(1) has five subunits: alpha(3), beta(3), gamma(1), delta(1), epsilon(1). CF(0) has four main subunits: a, b, b' and c.

It localises to the plastid. It is found in the chloroplast thylakoid membrane. It catalyses the reaction ATP + H2O + 4 H(+)(in) = ADP + phosphate + 5 H(+)(out). Its function is as follows. Produces ATP from ADP in the presence of a proton gradient across the membrane. The alpha chain is a regulatory subunit. In Lobularia maritima (Sweet alyssum), this protein is ATP synthase subunit alpha, chloroplastic.